The primary structure comprises 529 residues: Glycerol kinase 5 (529 aa).

ATP is bound by residues Thr-22 and Thr-23. Residues Arg-92, Asp-269, and Gln-270 each coordinate glycerol. Residues Thr-291, Gly-334, and Gly-434 each contribute to the ATP site.

The protein belongs to the FGGY kinase family.

It localises to the cytoplasm. The enzyme catalyses glycerol + ATP = sn-glycerol 3-phosphate + ADP + H(+). Its pathway is polyol metabolism; glycerol degradation via glycerol kinase pathway; sn-glycerol 3-phosphate from glycerol: step 1/1. Functionally, skin-specific kinase that plays a key role in glycerol metabolism, catalyzing its phosphorylation to produce sn-glycerol 3-phosphate. Involved in skin-specific regulation of sterol regulatory element-binding protein (SREBP) processing and lipid biosynthesis. The chain is Glycerol kinase 5 (gk5) from Danio rerio (Zebrafish).